An 855-amino-acid polypeptide reads, in one-letter code: MKPRPGVFVDRKLKQRVIQYLSSNRCGKYVDTGILASDLQRLYSVDYGRRKRNAFRIQVEKVFSIISSEKELKNLKELEDGHLAKRARQDEEDEYTESYSDDDSNMEDYPDPQSANPMNSSLLSLYRRGNSESVSTTPKWGQREATTSTPLLTSKTGSVPLKTPARESEGGWFIDKTPGGKKESLPLDLSDDQSNSKKQDSEIQILKDSSLLESDKKRKGRAKGKGNKRKTENLQEVDGEIEALLQKKAKARSTELQISNVKFEDVGGNDATLKEVCKMLIHMRHPEVYQHLGVVPPRGVLLHGPPGCGKTLLAHAIAGELDLPILKVAAPEIVSGVSGESEQKLRELFDQAVSNAPCIVFIDEIDAITPKREVASKDMERRIVAQLLTCMDDLNNVAATARVLVIGATNRPDSLDPALRRAGRFDREVCLGIPDEAARERILQTLCRKLRLPETFNFCHLAHLTPGFVGADLMALCREAAMCAVNRVLMKQQAQQKKKPEIEGLPSEGDQEERLGAEPTSETQDELQRLLGLLRDQDPLSEEQMQGLCIELNDFIVALAEVQPSAKREGFVTVPNVTWADIGALEDIRDELIMAILAPVRNPDQFRTLGLGTPAGILLAGPPGCGKTLLAKAVANESGLNFISVKGPELLNMYVGESERAVRQVFQRAKNSAPCVIFFDEVDALCPRRSDRETGASVRVVNQLLTEMDGLETRQQVFILAATNRPDIIDPAILRPGRLDKTLFVGLPPPADRVAILKTITKNGTKPPLDEDVNLETIANDLRCNCYTGADLTALVREASLCALRQEITAQKNGVGAGELKVSHKHFEDAFKKVKPSISIKDQVMYEALQRSLSQ.

An interaction with RPL5 region spans residues 1 to 219 (MKPRPGVFVD…SLLESDKKRK (219 aa)). A Nucleolar localization signal motif is present at residues 49–52 (RRKR). N6-acetyllysine is present on Lys-70. The segment at 83-234 (LAKRARQDEE…KGNKRKTENL (152 aa)) is disordered. The Nuclear localization signal motif lies at 85–88 (KRAR). Acidic residues predominate over residues 90–110 (DEEDEYTESYSDDDSNMEDYP). Composition is skewed to polar residues over residues 113–123 (QSANPMNSSLL) and 131–157 (SESVSTTPKWGQREATTSTPLLTSKTG). Ser-133 carries the post-translational modification Phosphoserine. The residue at position 137 (Thr-137) is a Phosphothreonine. The residue at position 155 (Lys-155) is an N6-acetyllysine. Ser-190 is subject to Phosphoserine. Lys-207 participates in a covalent cross-link: Glycyl lysine isopeptide (Lys-Gly) (interchain with G-Cter in SUMO2). 2 positions are modified to phosphoserine: Ser-210 and Ser-214. Residues 217-228 (KRKGRAKGKGNK) show a composition bias toward basic residues. The short motif at 217 to 231 (KRKGRAKGKGNKRKT) is the Nuclear localization signal element. Positions 266–473 (VGGNDATLKE…LTPGFVGADL (208 aa)) are interaction with WDR74. 304 to 311 (GPPGCGKT) is an ATP binding site. The segment at 496-523 (QKKKPEIEGLPSEGDQEERLGAEPTSET) is disordered. 621 to 628 (GPPGCGKT) provides a ligand contact to ATP.

This sequence belongs to the AAA ATPase family. Interacts with NCL/nucleolin. Isoform 1 and isoform 2 interact with TERT and isoform 1 exhibits a higher binding affinity for TERT compared to isoform 2. Isoform 1 interacts with MTREX in an ATP-dependent manner; the interaction is required to associate NVL with nuclear RNA exosome. Isoform 1 interacts with RPL5 in an ATP-dependent manner. Interacts with WDR74 (through WDR repeats); the interaction is independent of RNA or pre-60S ribosome particles.

Its subcellular location is the nucleus. The protein localises to the nucleolus. It localises to the nucleoplasm. Functionally, participates in the assembly of the telomerase holoenzyme and effecting of telomerase activity via its interaction with TERT. Involved in both early and late stages of the pre-rRNA processing pathways. Spatiotemporally regulates 60S ribosomal subunit biogenesis in the nucleolus. Catalyzes the release of specific assembly factors, such as WDR74, from pre-60S ribosomal particles through the ATPase activity. The protein is Nuclear valosin-containing protein-like of Mus musculus (Mouse).